Reading from the N-terminus, the 216-residue chain is Large ribosomal subunit protein uL24m (216 aa).

The N-terminal 9 residues, methionine 1–methionine 9, are a transit peptide targeting the mitochondrion. The region spanning tyrosine 56–aspartate 89 is the KOW domain.

It belongs to the universal ribosomal protein uL24 family. Component of the mitochondrial ribosome large subunit (39S) which comprises a 16S rRNA and about 50 distinct proteins. Ubiquitous. Expressed at greater levels in the kidney, adipose tissue, muscle and liver than the brain, heart, ovary and lung.

It localises to the mitochondrion. This Xenopus laevis (African clawed frog) protein is Large ribosomal subunit protein uL24m (mrpl24).